The following is a 462-amino-acid chain: Asparagine--tRNA ligase (462 aa).

The protein belongs to the class-II aminoacyl-tRNA synthetase family. Homodimer.

It is found in the cytoplasm. It carries out the reaction tRNA(Asn) + L-asparagine + ATP = L-asparaginyl-tRNA(Asn) + AMP + diphosphate + H(+). The chain is Asparagine--tRNA ligase from Borreliella burgdorferi (strain ATCC 35210 / DSM 4680 / CIP 102532 / B31) (Borrelia burgdorferi).